The chain runs to 657 residues: 1-deoxy-D-xylulose-5-phosphate synthase (657 aa).

His-73 is a thiamine diphosphate binding site. Residues 91-110 (RQEGGMSGYPDRGESEHDIV) are disordered. The segment covering 101–110 (DRGESEHDIV) has biased composition (basic and acidic residues). 113-115 (SHA) serves as a coordination point for thiamine diphosphate. Asp-145 is a Mg(2+) binding site. Residues 146–147 (GA), Asn-175, Tyr-293, and Glu-375 contribute to the thiamine diphosphate site. Position 175 (Asn-175) interacts with Mg(2+).

The protein belongs to the transketolase family. DXPS subfamily. As to quaternary structure, homodimer. Mg(2+) serves as cofactor. It depends on thiamine diphosphate as a cofactor.

It carries out the reaction D-glyceraldehyde 3-phosphate + pyruvate + H(+) = 1-deoxy-D-xylulose 5-phosphate + CO2. It participates in metabolic intermediate biosynthesis; 1-deoxy-D-xylulose 5-phosphate biosynthesis; 1-deoxy-D-xylulose 5-phosphate from D-glyceraldehyde 3-phosphate and pyruvate: step 1/1. In terms of biological role, catalyzes the acyloin condensation reaction between C atoms 2 and 3 of pyruvate and glyceraldehyde 3-phosphate to yield 1-deoxy-D-xylulose-5-phosphate (DXP). The polypeptide is 1-deoxy-D-xylulose-5-phosphate synthase (Arthrobacter sp. (strain FB24)).